The sequence spans 485 residues: Trigger factor (485 aa).

The region spanning 171-256 is the PPIase FKBP-type domain; that stretch reads GDRVVIDFVG…VKAVKAPGEA (86 aa). Residues 443–485 form a disordered region; the sequence is FADDEDEAAEAAAPASEAGASKGVISEGVISEGSAPSHETGAA. Positions 452 to 462 are enriched in low complexity; that stretch reads EAAAPASEAGA.

Belongs to the FKBP-type PPIase family. Tig subfamily.

It localises to the cytoplasm. The enzyme catalyses [protein]-peptidylproline (omega=180) = [protein]-peptidylproline (omega=0). Its function is as follows. Involved in protein export. Acts as a chaperone by maintaining the newly synthesized protein in an open conformation. Functions as a peptidyl-prolyl cis-trans isomerase. This is Trigger factor from Methylobacterium sp. (strain 4-46).